Reading from the N-terminus, the 1481-residue chain is Neuropathy target esterase sws (1481 aa).

The Lumenal portion of the chain corresponds to 1 to 34 (MDVLELLRASANGCYNTIFSDAWSQYVSQQITSS). A helical membrane pass occupies residues 35–55 (LYLYIALGILTVLFVAWFIYF). The Cytoplasmic segment spans residues 56 to 1481 (KRLARLRLRD…KENKNVNTKN (1426 aa)). 175-302 (IFGHFEKPVF…IRVIQVIMIR (128 aa)) serves as a coordination point for a nucleoside 3',5'-cyclic phosphate. Residues 336 to 420 (HLNSQSQSSQ…NNVQLPEVHG (85 aa)) form a disordered region. Low complexity-rich tracts occupy residues 339–379 (SQSQ…LPLQ) and 401–412 (SGPNPNPNSGNN). At Ser-448 the chain carries Phosphoserine. Residues 492–624 (ELGL…VVRR) and 613–740 (IVLD…LSHR) each bind a nucleoside 3',5'-cyclic phosphate. Positions 967-1133 (LVLGGGGARG…VNNLPGHLWR (167 aa)) constitute a PNPLA domain. The GXGXXG motif lies at 971–976 (GGGARG). The GXSXG motif lies at 998–1002 (GVSIG). Ser-1000 (nucleophile) is an active-site residue. Asp-1120 (proton acceptor) is an active-site residue. The short motif at 1120-1122 (DGG) is the DGA/G element. A Phosphoserine modification is found at Ser-1214. A disordered region spans residues 1366 to 1481 (LSLSEAEMDS…KENKNVNTKN (116 aa)). Composition is skewed to basic and acidic residues over residues 1379-1390 (IDFRSDSKKDKA) and 1400-1410 (KDNEDKTDAVD). Positions 1445–1457 (TNTMTTQTTSPTT) are enriched in low complexity.

The protein belongs to the NTE family. Interacts with Pka-C3; interaction inhibits the catalytic function of Pka-C3 and the esterase activity of sws.

It localises to the endoplasmic reticulum membrane. The catalysed reaction is a 1-acyl-sn-glycero-3-phosphocholine + H2O = sn-glycerol 3-phosphocholine + a fatty acid + H(+). Phospholipase B that deacylates intracellular phosphatidylcholine (PtdCho), generating glycerophosphocholine (GroPtdCho). This deacylation occurs at both sn-2 and sn-1 positions of PtdCho. Its specific chemical modification by certain organophosphorus (OP) compounds leads to distal axonopathy. Plays a role in the signaling mechanism between neurons and glia that regulates glia wrapping during development of the adult brain. Essential for membrane lipid homeostasis and cell survival in both neurons and glia of the adult brain. The polypeptide is Neuropathy target esterase sws (Drosophila willistoni (Fruit fly)).